We begin with the raw amino-acid sequence, 515 residues long: Phenylalanine--tRNA ligase beta subunit (515 aa).

Residues 263–334 (HEYVKIYVDE…IVMGYNQMPR (72 aa)) form the B5 domain. 4 residues coordinate Mg(2+): Asn-312, Asp-318, Glu-321, and Asp-322.

This sequence belongs to the phenylalanyl-tRNA synthetase beta subunit family. Type 2 subfamily. As to quaternary structure, tetramer of two alpha and two beta subunits. Mg(2+) serves as cofactor.

The protein localises to the cytoplasm. It catalyses the reaction tRNA(Phe) + L-phenylalanine + ATP = L-phenylalanyl-tRNA(Phe) + AMP + diphosphate + H(+). This Pyrobaculum aerophilum (strain ATCC 51768 / DSM 7523 / JCM 9630 / CIP 104966 / NBRC 100827 / IM2) protein is Phenylalanine--tRNA ligase beta subunit.